Consider the following 95-residue polypeptide: UPF0132 membrane protein AF_0736 (95 aa).

Helical transmembrane passes span cysteine 2 to valine 22, threonine 32 to leucine 52, and valine 55 to glutamate 75.

Belongs to the UPF0132 family.

The protein localises to the cell membrane. The chain is UPF0132 membrane protein AF_0736 from Archaeoglobus fulgidus (strain ATCC 49558 / DSM 4304 / JCM 9628 / NBRC 100126 / VC-16).